A 321-amino-acid chain; its full sequence is UDP-N-acetylenolpyruvoylglucosamine reductase (321 aa).

Residues 36–203 enclose the FAD-binding PCMH-type domain; sequence FRAGGLAEVM…TGALFEGYPE (168 aa). The active site involves arginine 183. The active-site Proton donor is serine 232. Residue glutamate 302 is part of the active site.

The protein belongs to the MurB family. Requires FAD as cofactor.

The protein localises to the cytoplasm. The catalysed reaction is UDP-N-acetyl-alpha-D-muramate + NADP(+) = UDP-N-acetyl-3-O-(1-carboxyvinyl)-alpha-D-glucosamine + NADPH + H(+). The protein operates within cell wall biogenesis; peptidoglycan biosynthesis. Cell wall formation. This is UDP-N-acetylenolpyruvoylglucosamine reductase from Agrobacterium fabrum (strain C58 / ATCC 33970) (Agrobacterium tumefaciens (strain C58)).